Consider the following 165-residue polypeptide: Lipoprotein signal peptidase (165 aa).

The next 2 helical transmembrane spans lie at 64 to 84 and 88 to 108; these read LGRW…GAWM and GSRL…GNAV. Active-site residues include aspartate 118 and aspartate 136. A helical membrane pass occupies residues 128–148; the sequence is SWYVFNVADAGIVAGVAGLLV.

It belongs to the peptidase A8 family.

It localises to the cell inner membrane. It catalyses the reaction Release of signal peptides from bacterial membrane prolipoproteins. Hydrolyzes -Xaa-Yaa-Zaa-|-(S,diacylglyceryl)Cys-, in which Xaa is hydrophobic (preferably Leu), and Yaa (Ala or Ser) and Zaa (Gly or Ala) have small, neutral side chains.. The protein operates within protein modification; lipoprotein biosynthesis (signal peptide cleavage). This protein specifically catalyzes the removal of signal peptides from prolipoproteins. This Methylobacterium sp. (strain 4-46) protein is Lipoprotein signal peptidase.